Consider the following 120-residue polypeptide: uncharacterized protein (120 aa).

The next 2 helical transmembrane spans lie at 26–46 (PSTS…PAGM) and 57–77 (LLFA…LTLV).

It localises to the membrane. This is an uncharacterized protein from Saccharomyces cerevisiae (strain ATCC 204508 / S288c) (Baker's yeast).